The chain runs to 396 residues: Phosphopentomutase (396 aa).

Mn(2+) contacts are provided by Asp-14, Asp-286, His-291, Asp-327, His-328, and His-339.

This sequence belongs to the phosphopentomutase family. The cofactor is Mn(2+).

It localises to the cytoplasm. It carries out the reaction 2-deoxy-alpha-D-ribose 1-phosphate = 2-deoxy-D-ribose 5-phosphate. The enzyme catalyses alpha-D-ribose 1-phosphate = D-ribose 5-phosphate. It functions in the pathway carbohydrate degradation; 2-deoxy-D-ribose 1-phosphate degradation; D-glyceraldehyde 3-phosphate and acetaldehyde from 2-deoxy-alpha-D-ribose 1-phosphate: step 1/2. In terms of biological role, isomerase that catalyzes the conversion of deoxy-ribose 1-phosphate (dRib-1-P) and ribose 1-phosphate (Rib-1-P) to deoxy-ribose 5-phosphate (dRib-5-P) and ribose 5-phosphate (Rib-5-P), respectively. This chain is Phosphopentomutase, found in Staphylococcus epidermidis (strain ATCC 35984 / DSM 28319 / BCRC 17069 / CCUG 31568 / BM 3577 / RP62A).